The following is a 189-amino-acid chain: MPSTVAPIKGQDHFLNLVFPERVAAAYMSPLAQKYPKAALSIASLAGFLLGILKLITFPVLCAAGLFVFPIRGLISCLFHKSFQGCSGYVLATFLSLFSLALTIVGIVSCITWAPGFIFPMISVSIAFATVETCFQIYTHLFPALEHKPSSSLKIEIAAAKLPRSSSAPDLNYPSLPTQSASPSQRFSA.

Helical transmembrane passes span 49-69, 78-98, 102-122, and 124-144; these read LLGI…LFVF, LFHK…LSLF, LTIV…FPMI, and VSIA…LFPA. Positions 165-189 are disordered; sequence SSSAPDLNYPSLPTQSASPSQRFSA.

This sequence belongs to the chlamydial CPn_0442/CT_006/TC_0274 family.

The protein resides in the cell membrane. This is an uncharacterized protein from Chlamydia trachomatis serovar D (strain ATCC VR-885 / DSM 19411 / UW-3/Cx).